Consider the following 332-residue polypeptide: Mitotic spindle assembly checkpoint protein MAD2B (332 aa).

The 329-residue stretch at 4–332 (EHFCDCIGEF…RTFTEQSITK (329 aa)) folds into the HORMA domain. Disordered stretches follow at residues 181 to 204 (KTQQ…NGFI) and 225 to 244 (KSNQ…GDKD). The span at 230-244 (NKKEDNDDNNNGDKD) shows a compositional bias: basic and acidic residues.

The protein belongs to the MAD2 family.

The protein resides in the nucleus. Functionally, adapter protein able to interact with different proteins and involved in different biological processes. In Dictyostelium discoideum (Social amoeba), this protein is Mitotic spindle assembly checkpoint protein MAD2B (mad2l2).